The chain runs to 95 residues: Microcin E492 immunity protein (95 aa).

The next 3 membrane-spanning stretches (helical) occupy residues 1-21 (MTLL…FCII), 35-55 (VIVL…TKVY), and 67-87 (YLFC…ILTI).

The protein belongs to the MceB microcin immunity protein family.

Its subcellular location is the cell inner membrane. In terms of biological role, protect the producing cell against microcin E492. The protein is Microcin E492 immunity protein of Klebsiella pneumoniae.